A 208-amino-acid polypeptide reads, in one-letter code: Protein-L-isoaspartate O-methyltransferase (208 aa).

Residue serine 59 is part of the active site.

Belongs to the methyltransferase superfamily. L-isoaspartyl/D-aspartyl protein methyltransferase family.

The protein localises to the cytoplasm. The catalysed reaction is [protein]-L-isoaspartate + S-adenosyl-L-methionine = [protein]-L-isoaspartate alpha-methyl ester + S-adenosyl-L-homocysteine. Catalyzes the methyl esterification of L-isoaspartyl residues in peptides and proteins that result from spontaneous decomposition of normal L-aspartyl and L-asparaginyl residues. It plays a role in the repair and/or degradation of damaged proteins. The polypeptide is Protein-L-isoaspartate O-methyltransferase (Salmonella arizonae (strain ATCC BAA-731 / CDC346-86 / RSK2980)).